The chain runs to 367 residues: MMMTAIGLMSGTSLDGVDVALIKTDGRHVAALGPSGYRPYTETERGLLRQALAEATGLDRRDARPGILAEAERAVTIAHAEAVAAFVAQNRITAGAIDIVGFHGQTVLHRPAAKLTVQIGDAQALAKAIRIPVMHDFRAADVAAGGQGAPFVPVYHRALAQSLGRDGPIVVVNIGGVSNVTYIDGNDALIACDTGPGNALLDDFVFRAIGKPFDCEGRLAAQGTADEGWIADALQHPFFAQRPPKSLDRNDFASLGLRDWSPADGAATLTAFTAGAIAAIVPLLPKPPTSFVITGGGARNLTMMRMLREQLEPARVESADALGWSADAMEAQAFGFLAARGLKGLPLSYPATTGVSFPMTGGLLARP.

11-18 (GTSLDGVD) contacts ATP.

This sequence belongs to the anhydro-N-acetylmuramic acid kinase family.

The catalysed reaction is 1,6-anhydro-N-acetyl-beta-muramate + ATP + H2O = N-acetyl-D-muramate 6-phosphate + ADP + H(+). It functions in the pathway amino-sugar metabolism; 1,6-anhydro-N-acetylmuramate degradation. It participates in cell wall biogenesis; peptidoglycan recycling. Functionally, catalyzes the specific phosphorylation of 1,6-anhydro-N-acetylmuramic acid (anhMurNAc) with the simultaneous cleavage of the 1,6-anhydro ring, generating MurNAc-6-P. Is required for the utilization of anhMurNAc either imported from the medium or derived from its own cell wall murein, and thus plays a role in cell wall recycling. This is Anhydro-N-acetylmuramic acid kinase from Rhodopseudomonas palustris (strain HaA2).